The following is a 180-amino-acid chain: Large ribosomal subunit protein uL5 (180 aa).

It belongs to the universal ribosomal protein uL5 family. Part of the 50S ribosomal subunit; part of the 5S rRNA/L5/L18/L25 subcomplex. Contacts the 5S rRNA and the P site tRNA. Forms a bridge to the 30S subunit in the 70S ribosome.

This is one of the proteins that bind and probably mediate the attachment of the 5S RNA into the large ribosomal subunit, where it forms part of the central protuberance. In the 70S ribosome it contacts protein S13 of the 30S subunit (bridge B1b), connecting the 2 subunits; this bridge is implicated in subunit movement. Contacts the P site tRNA; the 5S rRNA and some of its associated proteins might help stabilize positioning of ribosome-bound tRNAs. In Chlamydia trachomatis serovar L2 (strain ATCC VR-902B / DSM 19102 / 434/Bu), this protein is Large ribosomal subunit protein uL5.